The sequence spans 499 residues: Protein SENSITIVE TO PROTON RHIZOTOXICITY 1 (499 aa).

Residues 1–31 (METEDDLCNTNWGSSSSKSREPGSSDCGNST) form a disordered region. The C2H2-type 1 zinc finger occupies 244–266 (HFCTICGKGFKRDANLRMHMRGH). The segment at 354-385 (KHCGKNKWLCSCGTTFSRKDKLFGHIALFQGH) adopts a C2H2-type 2; atypical zinc-finger fold. The interval 390–436 (PLEETKPSASTSTQRGSSEGGNNNQGMVGFNLGSASNANQETTQPGM) is disordered. Composition is skewed to polar residues over residues 396 to 415 (PSAS…NNQG) and 422 to 435 (GSAS…TQPG).

In terms of tissue distribution, expressed in roots (e.g. root tips and lateral roots), leaves, flowers (e.g. stigma, sepal, anther, and filament), stems, siliques and cotyledons.

The protein localises to the nucleus. Functionally, probable transcription factor. Together with STOP2, plays a critical role in tolerance to major stress factors in acid soils such as proton H(+) and aluminum ion Al(3+). Required for the expression of genes in response to acidic stress (e.g. ALMT1 and MATE), and Al-activated citrate exudation. This Arabidopsis thaliana (Mouse-ear cress) protein is Protein SENSITIVE TO PROTON RHIZOTOXICITY 1.